The primary structure comprises 379 residues: Alanine racemase (379 aa).

The active-site Proton acceptor; specific for D-alanine is the Lys-37. Lys-37 bears the N6-(pyridoxal phosphate)lysine mark. Position 137 (Arg-137) interacts with substrate. Catalysis depends on Tyr-269, which acts as the Proton acceptor; specific for L-alanine. Position 317 (Met-317) interacts with substrate.

It belongs to the alanine racemase family. It depends on pyridoxal 5'-phosphate as a cofactor.

It carries out the reaction L-alanine = D-alanine. The protein operates within amino-acid biosynthesis; D-alanine biosynthesis; D-alanine from L-alanine: step 1/1. Catalyzes the interconversion of L-alanine and D-alanine. May also act on other amino acids. In Geobacter sp. (strain M21), this protein is Alanine racemase (alr).